Here is a 287-residue protein sequence, read N- to C-terminus: ATP synthase gamma chain (287 aa).

Belongs to the ATPase gamma chain family. F-type ATPases have 2 components, CF(1) - the catalytic core - and CF(0) - the membrane proton channel. CF(1) has five subunits: alpha(3), beta(3), gamma(1), delta(1), epsilon(1). CF(0) has three main subunits: a, b and c.

It is found in the cell inner membrane. Its function is as follows. Produces ATP from ADP in the presence of a proton gradient across the membrane. The gamma chain is believed to be important in regulating ATPase activity and the flow of protons through the CF(0) complex. The polypeptide is ATP synthase gamma chain (Sodalis glossinidius (strain morsitans)).